A 136-amino-acid chain; its full sequence is MLQPKRTKFRKMHKGRNRGLAVGTDVSFGTFGLKAVGRGRLTARQIEAARRAMTRAVKRQGKIWIRIFPDKPITEKPLEVRMGKGKGNVEYWVALIQPGKVLYEMDGVPEELAREAFKLAAAKLPIKTTFVTKTVM.

Belongs to the universal ribosomal protein uL16 family. As to quaternary structure, part of the 50S ribosomal subunit.

Binds 23S rRNA and is also seen to make contacts with the A and possibly P site tRNAs. This chain is Large ribosomal subunit protein uL16, found in Sodalis glossinidius (strain morsitans).